The sequence spans 324 residues: 2,3,4,5-tetrahydropyridine-2,6-dicarboxylate N-succinyltransferase (324 aa).

Mg(2+) contacts are provided by aspartate 173 and glutamate 190. Glutamate 206 acts as the Acyl-anhydride intermediate in catalysis. Succinyl-CoA contacts are provided by residues arginine 208, glycine 223, serine 226, alanine 249, 264–265 (EA), glycine 272, lysine 284, and 297–300 (RRNS).

Belongs to the type 2 tetrahydrodipicolinate N-succinyltransferase family. Homotrimer.

It is found in the cytoplasm. The enzyme catalyses (S)-2,3,4,5-tetrahydrodipicolinate + succinyl-CoA + H2O = (S)-2-succinylamino-6-oxoheptanedioate + CoA. It functions in the pathway amino-acid biosynthesis; L-lysine biosynthesis via DAP pathway; LL-2,6-diaminopimelate from (S)-tetrahydrodipicolinate (succinylase route): step 1/3. Its function is as follows. Catalyzes the conversion of the cyclic tetrahydrodipicolinate (THDP) into the acyclic N-succinyl-L-2-amino-6-oxopimelate using succinyl-CoA. The chain is 2,3,4,5-tetrahydropyridine-2,6-dicarboxylate N-succinyltransferase from Geodermatophilus obscurus (strain ATCC 25078 / DSM 43160 / JCM 3152 / CCUG 61914 / KCC A-0152 / KCTC 9177 / NBRC 13315 / NRRL B-3577 / G-20).